Consider the following 266-residue polypeptide: Cytochrome c oxidase subunit 2 (266 aa).

Residues 1-43 (MTITNYINNQFTFLDMAEPWQLGFQDPATPVMEGIINFHHDLM) are Mitochondrial intermembrane-facing. The chain crosses the membrane as a helical span at residues 44–64 (FFLISIVVFVCWMLFRVITLF). Topologically, residues 65 to 82 (DEKKNKIPATVVHGATIE) are mitochondrial matrix. Residues 83-103 (IIWTSIPALILLTVAVPSFAL) form a helical membrane-spanning segment. Topologically, residues 104-266 (LYSMDEVIDP…NVXLIKFYGI (163 aa)) are mitochondrial intermembrane. Residues His-186, Cys-221, Glu-223, Cys-225, His-229, and Met-232 each contribute to the Cu cation site. Glu-223 serves as a coordination point for Mg(2+).

Belongs to the cytochrome c oxidase subunit 2 family. Component of the cytochrome c oxidase (complex IV, CIV), a multisubunit enzyme composed of a catalytic core of 3 subunits and several supernumerary subunits. The complex exists as a monomer or a dimer and forms supercomplexes (SCs) in the inner mitochondrial membrane with ubiquinol-cytochrome c oxidoreductase (cytochrome b-c1 complex, complex III, CIII). It depends on Cu cation as a cofactor.

The protein resides in the mitochondrion inner membrane. It catalyses the reaction 4 Fe(II)-[cytochrome c] + O2 + 8 H(+)(in) = 4 Fe(III)-[cytochrome c] + 2 H2O + 4 H(+)(out). In terms of biological role, component of the cytochrome c oxidase, the last enzyme in the mitochondrial electron transport chain which drives oxidative phosphorylation. The respiratory chain contains 3 multisubunit complexes succinate dehydrogenase (complex II, CII), ubiquinol-cytochrome c oxidoreductase (cytochrome b-c1 complex, complex III, CIII) and cytochrome c oxidase (complex IV, CIV), that cooperate to transfer electrons derived from NADH and succinate to molecular oxygen, creating an electrochemical gradient over the inner membrane that drives transmembrane transport and the ATP synthase. Cytochrome c oxidase is the component of the respiratory chain that catalyzes the reduction of oxygen to water. Electrons originating from reduced cytochrome c in the intermembrane space (IMS) are transferred via the dinuclear copper A center (CU(A)) of subunit 2 and heme A of subunit 1 to the active site in subunit 1, a binuclear center (BNC) formed by heme A3 and copper B (CU(B)). The BNC reduces molecular oxygen to 2 water molecules using 4 electrons from cytochrome c in the IMS and 4 protons from the mitochondrial matrix. This chain is Cytochrome c oxidase subunit 2 (COX2), found in Phytophthora megasperma (Potato pink rot fungus).